The following is a 321-amino-acid chain: Glucokinase (321 aa).

10–15 (GDIGGT) serves as a coordination point for ATP.

This sequence belongs to the bacterial glucokinase family.

It is found in the cytoplasm. It catalyses the reaction D-glucose + ATP = D-glucose 6-phosphate + ADP + H(+). The sequence is that of Glucokinase from Marinobacter nauticus (strain ATCC 700491 / DSM 11845 / VT8) (Marinobacter aquaeolei).